Here is a 253-residue protein sequence, read N- to C-terminus: Probable transcriptional regulatory protein RPR_05505 (253 aa).

This sequence belongs to the TACO1 family.

It is found in the cytoplasm. This Rickettsia peacockii (strain Rustic) protein is Probable transcriptional regulatory protein RPR_05505.